A 610-amino-acid chain; its full sequence is Transducer of Cdc42-dependent actin assembly protein 2 homolog (610 aa).

One can recognise an F-BAR domain in the interval 1-267 (MIPVSRFFTV…EVGKIDAEGD (267 aa)). Residues 283 to 315 (APFEIEDLGDPKNCDSRTNDSADGSGGKLLKSS) form a disordered region. A compositionally biased stretch (basic and acidic residues) spans 291–302 (GDPKNCDSRTND). The REM-1 domain maps to 352 to 429 (SKPAHVRLSC…IHNLKEFYAM (78 aa)). A coiled-coil region spans residues 355 to 385 (AHVRLSCLRSKIRDMEKQLEQAIQGREGITR). 2 disordered regions span residues 436-487 (EGQE…SSKN) and 499-519 (LISS…RRAE). The segment covering 437–449 (GQERSFGGRDTPD) has biased composition (basic and acidic residues). The segment covering 453-464 (SMSGSSTNQSSS) has biased composition (low complexity). Polar residues predominate over residues 475–487 (AGNSSSADDSSKN). Low complexity predominate over residues 501–513 (SSPKTSKSSTPTP). An SH3 domain is found at 547 to 610 (ETAVTVTALF…VPTSYLQFPQ (64 aa)).

Belongs to the FNBP1 family. In terms of assembly, interacts (via SH3 domain) with wsp-1 and abi-1. Interacts with cdc-42 and (via SH3 domain) with wve-1.

It is found in the cell junction. The protein resides in the cell membrane. The protein localises to the cytoplasmic vesicle. Its subcellular location is the cytoplasm. It localises to the recycling endosome. Its function is as follows. Plays a role in protein trafficking, actin organization and embryonic morphogenesis. Potentially acts as a cdc-42 effector. May play a role in egg laying. Together with toca-1, is required for protein trafficking regulating yolk protein clathrin-mediated endocytosis by oocytes during oogenesis and retrograde recycling and the sorting of recycling endosome cargo proteins such as mig-14. Also, together with toca-2, controls the distribution of actin at cell junctions. This Caenorhabditis elegans protein is Transducer of Cdc42-dependent actin assembly protein 2 homolog.